The chain runs to 253 residues: ABC transporter D-alanine-binding periplasmic protein (253 aa).

An N-terminal signal peptide occupies residues 1–22 (MLSKKFGLSMIVLGIMSSSAFA). D-alanine-binding residues include glycine 95, serine 97, arginine 102, alanine 147, and glutamate 191.

It belongs to the bacterial solute-binding protein 3 family. In terms of assembly, monomer.

Its subcellular location is the periplasm. Functionally, part of the ABC transporter complex dalSTUV, that imports D-alanine into the cytoplasm. Helps protect the organism from oxidative killing by host neutrophils through sequestration of D-alanine, a substrate that is converted to hydrogen peroxide by the host enzyme DAO (D-amino acid oxidase). DalS shuttles D-alanine from the periplasm to the DalTUV complex situated in the inner membrane and through hydrolysis of ATP, D-alanine is transported across the membrane into the cytoplasm. Not required for the metabolism of D-alanine found in the stem peptide of peptidoglycan. This is ABC transporter D-alanine-binding periplasmic protein from Salmonella typhimurium (strain LT2 / SGSC1412 / ATCC 700720).